The sequence spans 310 residues: Small ribosomal subunit biogenesis GTPase RsgA (310 aa).

The 162-residue stretch at 77–238 folds into the CP-type G domain; the sequence is LSKQSHILAA…IIDTPGIKGF (162 aa). Residues 126–129 and 180–188 contribute to the GTP site; these read NKVD and GHSGVGKST. Zn(2+)-binding residues include cysteine 262, cysteine 267, histidine 269, and cysteine 275.

This sequence belongs to the TRAFAC class YlqF/YawG GTPase family. RsgA subfamily. Monomer. Associates with 30S ribosomal subunit, binds 16S rRNA. Requires Zn(2+) as cofactor.

Its subcellular location is the cytoplasm. In terms of biological role, one of several proteins that assist in the late maturation steps of the functional core of the 30S ribosomal subunit. Helps release RbfA from mature subunits. May play a role in the assembly of ribosomal proteins into the subunit. Circularly permuted GTPase that catalyzes slow GTP hydrolysis, GTPase activity is stimulated by the 30S ribosomal subunit. In Bacteroides fragilis (strain YCH46), this protein is Small ribosomal subunit biogenesis GTPase RsgA.